The sequence spans 210 residues: MDTFDAIYQRRSVKHFDPDHRLTAEEERKLHEAAIQAPTSFNIQLWRFLIIRDPQLRQTIREKYGNQAQMTDASLLILVAADVNAWDKDPARYWRNAPREVANYLVGAIASFYGGKPQLQRDEAQRSIGMAMQNLMLAAKAMGYDSCPMIGFDLQKVAELVKLPADYAIGPMVAIGKRTEDAPGKRRSNSPGRIPLGKLLCLTKVWCLAI.

It belongs to the nitroreductase family. Requires FMN as cofactor.

Its function is as follows. Controls resistance to the herbicide Dinoseb and metronidazole. Involved in detoxification of Dinoseb via the reduction of the nitro group(s) and this process is accompanied by the formation of toxic superoxide anions. This chain is Protein DrgA (drgA), found in Synechocystis sp. (strain ATCC 27184 / PCC 6803 / Kazusa).